We begin with the raw amino-acid sequence, 548 residues long: Probable delta-1-pyrroline-5-carboxylate dehydrogenase (548 aa).

Glu298 functions as the Proton acceptor in the catalytic mechanism. The Nucleophile role is filled by Cys332. A phosphoserine mark is found at Ser391, Ser394, and Ser396.

Belongs to the aldehyde dehydrogenase family.

It carries out the reaction L-glutamate 5-semialdehyde + NAD(+) + H2O = L-glutamate + NADH + 2 H(+). It functions in the pathway amino-acid degradation; L-proline degradation into L-glutamate; L-glutamate from L-proline: step 2/2. The chain is Probable delta-1-pyrroline-5-carboxylate dehydrogenase from Schizosaccharomyces pombe (strain 972 / ATCC 24843) (Fission yeast).